Reading from the N-terminus, the 163-residue chain is Acetolactate synthase isozyme 3 small subunit (163 aa).

In terms of domain architecture, ACT spans 4–78 (ILSVLLENES…DVLRVSELGQ (75 aa)).

Belongs to the acetolactate synthase small subunit family. As to quaternary structure, dimer of large and small chains.

The enzyme catalyses 2 pyruvate + H(+) = (2S)-2-acetolactate + CO2. It functions in the pathway amino-acid biosynthesis; L-isoleucine biosynthesis; L-isoleucine from 2-oxobutanoate: step 1/4. It participates in amino-acid biosynthesis; L-valine biosynthesis; L-valine from pyruvate: step 1/4. Its activity is regulated as follows. Sensitive to valine inhibition. The protein is Acetolactate synthase isozyme 3 small subunit (ilvH) of Salmonella typhimurium (strain LT2 / SGSC1412 / ATCC 700720).